The following is a 362-amino-acid chain: 3-dehydroquinate synthase (362 aa).

NAD(+) is bound by residues 71–76 (DGEQYK), 105–109 (GVVGD), 129–130 (TT), lysine 142, lysine 151, and 169–172 (CLKT). Residues glutamate 184, histidine 247, and histidine 264 each coordinate Zn(2+).

It belongs to the sugar phosphate cyclases superfamily. Dehydroquinate synthase family. NAD(+) is required as a cofactor. Co(2+) serves as cofactor. The cofactor is Zn(2+).

It is found in the cytoplasm. It catalyses the reaction 7-phospho-2-dehydro-3-deoxy-D-arabino-heptonate = 3-dehydroquinate + phosphate. Its pathway is metabolic intermediate biosynthesis; chorismate biosynthesis; chorismate from D-erythrose 4-phosphate and phosphoenolpyruvate: step 2/7. Catalyzes the conversion of 3-deoxy-D-arabino-heptulosonate 7-phosphate (DAHP) to dehydroquinate (DHQ). The sequence is that of 3-dehydroquinate synthase from Shigella flexneri.